Here is a 103-residue protein sequence, read N- to C-terminus: Large ribosomal subunit protein bL21 (103 aa).

Belongs to the bacterial ribosomal protein bL21 family. As to quaternary structure, part of the 50S ribosomal subunit. Contacts protein L20.

Functionally, this protein binds to 23S rRNA in the presence of protein L20. In Shewanella woodyi (strain ATCC 51908 / MS32), this protein is Large ribosomal subunit protein bL21.